The primary structure comprises 821 residues: Lon protease (821 aa).

The Lon N-terminal domain occupies Leu18–Ile216. Gly368–Thr375 lines the ATP pocket. The Lon proteolytic domain maps to Thr606 to Ala787. Residues Ser693 and Lys736 contribute to the active site.

This sequence belongs to the peptidase S16 family. Homohexamer. Organized in a ring with a central cavity.

It localises to the cytoplasm. The catalysed reaction is Hydrolysis of proteins in presence of ATP.. Its function is as follows. ATP-dependent serine protease that mediates the selective degradation of mutant and abnormal proteins as well as certain short-lived regulatory proteins. Required for cellular homeostasis and for survival from DNA damage and developmental changes induced by stress. Degrades polypeptides processively to yield small peptide fragments that are 5 to 10 amino acids long. Binds to DNA in a double-stranded, site-specific manner. This chain is Lon protease, found in Nitratidesulfovibrio vulgaris (strain ATCC 29579 / DSM 644 / CCUG 34227 / NCIMB 8303 / VKM B-1760 / Hildenborough) (Desulfovibrio vulgaris).